The chain runs to 318 residues: Gamma-glutamyl hydrolase (318 aa).

The N-terminal stretch at 1–24 (MARLGRLLSVLGLVLCGATGLGLS) is a signal peptide. The Gamma-glutamyl hydrolase domain maps to 25–318 (APPAPTPKKP…SSFQQSYIFD (294 aa)). A glycan (N-linked (GlcNAc...) asparagine) is linked at asparagine 116. The active-site Nucleophile is the cysteine 134. Residues asparagine 163 and asparagine 203 are each glycosylated (N-linked (GlcNAc...) asparagine). Catalysis depends on histidine 244, which acts as the Proton donor. A glycan (N-linked (GlcNAc...) asparagine) is linked at asparagine 307.

It belongs to the peptidase C26 family. Homodimer.

It localises to the secreted. Its subcellular location is the extracellular space. It is found in the lysosome. The protein resides in the melanosome. The catalysed reaction is (6S)-5,6,7,8-tetrahydrofolyl-(gamma-L-Glu)(n) + (n-1) H2O = (6S)-5,6,7,8-tetrahydrofolate + (n-1) L-glutamate. In terms of biological role, hydrolyzes the polyglutamate sidechains of pteroylpolyglutamates. Progressively removes gamma-glutamyl residues from pteroylpoly-gamma-glutamate to yield pteroyl-alpha-glutamate (folic acid) and free glutamate. May play an important role in the bioavailability of dietary pteroylpolyglutamates and in the metabolism of pteroylpolyglutamates and antifolates. Exhibits either endo- or exopeptidase activity depending upon the tissue of origin. When secreted, it acts primarily as an endopeptidase. This is Gamma-glutamyl hydrolase (GGH) from Bos taurus (Bovine).